The chain runs to 456 residues: tRNA-2-methylthio-N(6)-dimethylallyladenosine synthase (456 aa).

One can recognise an MTTase N-terminal domain in the interval Lys-17–Glu-135. 6 residues coordinate [4Fe-4S] cluster: Cys-26, Cys-62, Cys-96, Cys-172, Cys-176, and Cys-179. The 230-residue stretch at Arg-158–Glu-387 folds into the Radical SAM core domain. Residues Gln-390–Pro-453 enclose the TRAM domain.

Belongs to the methylthiotransferase family. MiaB subfamily. As to quaternary structure, monomer. [4Fe-4S] cluster is required as a cofactor.

Its subcellular location is the cytoplasm. It carries out the reaction N(6)-dimethylallyladenosine(37) in tRNA + (sulfur carrier)-SH + AH2 + 2 S-adenosyl-L-methionine = 2-methylsulfanyl-N(6)-dimethylallyladenosine(37) in tRNA + (sulfur carrier)-H + 5'-deoxyadenosine + L-methionine + A + S-adenosyl-L-homocysteine + 2 H(+). Its function is as follows. Catalyzes the methylthiolation of N6-(dimethylallyl)adenosine (i(6)A), leading to the formation of 2-methylthio-N6-(dimethylallyl)adenosine (ms(2)i(6)A) at position 37 in tRNAs that read codons beginning with uridine. In Desulforamulus reducens (strain ATCC BAA-1160 / DSM 100696 / MI-1) (Desulfotomaculum reducens), this protein is tRNA-2-methylthio-N(6)-dimethylallyladenosine synthase.